Consider the following 347-residue polypeptide: Malate dehydrogenase, mitochondrial (347 aa).

Residues 1–27 (MKASILRSVRSAVSRSSSSNRLLSRSF) constitute a mitochondrion transit peptide. Residues 41 to 47 (GAAGGIG) and D67 each bind NAD(+). Residues R114 and R120 each coordinate substrate. NAD(+)-binding positions include N127 and 150-152 (ISN). Residues N152 and R186 each contribute to the substrate site. Catalysis depends on H210, which acts as the Proton acceptor. M261 lines the NAD(+) pocket.

The protein belongs to the LDH/MDH superfamily. MDH type 1 family. In terms of assembly, homodimer.

It is found in the mitochondrion matrix. It catalyses the reaction (S)-malate + NAD(+) = oxaloacetate + NADH + H(+). The protein is Malate dehydrogenase, mitochondrial (MMDH) of Citrullus lanatus (Watermelon).